We begin with the raw amino-acid sequence, 1308 residues long: Cadherin-related family member 2 (1308 aa).

Positions 1–20 (MAWLWLLCALLPAFMVSVTA) are cleaved as a signal peptide. The Extracellular segment spans residues 21-1152 (NSPPSFGVNM…EPDQQKLLTS (1132 aa)). Cadherin domains follow at residues 33–124 (VTLP…IPVF), 125–241 (LNTE…DPRF), 242–353 (IREF…KPEF), 368–480 (AQVN…RPVF), 481–586 (SQSL…PPVV), 586–695 (VRGS…LPVF), 695–807 (FNQS…PPTL), 809–927 (AASL…APYF), and 929–1051 (PNNQ…RLQF). The helical transmembrane segment at 1153 to 1173 (VIIGLVVSLVLVLVILITALV) threads the bilayer. Residues 1174-1308 (CLRKSYHRKL…TNPGLDTTDL (135 aa)) are Cytoplasmic-facing. Residues 1178–1308 (SYHRKLRAMK…TNPGLDTTDL (131 aa)) are mediates interaction with USH1C and MYO7B and is required for proper localization to microvilli tips and function in microvilli organization. S1245 is modified (phosphoserine). A disordered region spans residues 1251–1308 (VDLDMDSKEFKRKDLPGDPPEPDPEPLTAVLSGRSAGASEQQKKNLSFTNPGLDTTDL). Positions 1255–1266 (MDSKEFKRKDLP) are enriched in basic and acidic residues. The segment covering 1288 to 1308 (ASEQQKKNLSFTNPGLDTTDL) has biased composition (polar residues). S1297 carries the phosphoserine modification.

In terms of assembly, part of the IMAC/intermicrovillar adhesion complex/intermicrovillar tip-link complex composed of ANKS4B, MYO7B, USH1C, CDHR2 and CDHR5. Interacts with MAST2. Interacts (via cytoplasmic domain) with USH1C and MYO7B; required for proper localization of CDHR2 to microvilli tips and its function in brush border differentiation.

It localises to the apical cell membrane. Its subcellular location is the cell projection. The protein localises to the microvillus membrane. The protein resides in the cell junction. Its function is as follows. Intermicrovillar adhesion molecule that forms, via its extracellular domain, calcium-dependent heterophilic complexes with CDHR5 on adjacent microvilli. Thereby, controls the packing of microvilli at the apical membrane of epithelial cells. Through its cytoplasmic domain, interacts with microvillus cytoplasmic proteins to form the intermicrovillar adhesion complex/IMAC. This complex plays a central role in microvilli and epithelial brush border differentiation. May also play a role in cell-cell adhesion and contact inhibition in epithelial cells. In Mus musculus (Mouse), this protein is Cadherin-related family member 2.